The sequence spans 144 residues: DAEPPSPAEECAAVKMESCGDDWLYIDENRKVKYFETPKTFQEAQDHCESEDGNLVAMHTEFQKYVVACLSWIYNHKLHRMWIGAGRSEGETQNIDGSDFDYAKWKGGQPDNFGGNEDCIEANFIDWGYLNDVECSEKLPFMCA.

The C-type lectin domain occupies aspartate 27–alanine 144. 2 cysteine pairs are disulfide-bonded: cysteine 48-cysteine 143 and cysteine 119-cysteine 135.

It belongs to the true venom lectin family. Post-translationally, glycosylated with a carbohydrate of 383 Da. Expressed by the venom gland.

It is found in the secreted. The role of this hemagglutinin in the venom is unknown, because it is masked by the high venom hemolytic activity. Lectin with specificity to galactose. Induces hemagglutination. The sequence is that of C-type isolectin Sp-CL4 from Scorpaena plumieri (Spotted scorpionfish).